The sequence spans 410 residues: Single Ig IL-1-related receptor (410 aa).

At 1-118 (MPGVCDRAPD…TLQRAGPTSH (118 aa)) the chain is on the extracellular side. An Ig-like C2-type domain is found at 9–109 (PDFLSPSEDQ…IQNISFSSFT (101 aa)). Asn31, Asn73, Asn86, and Asn102 each carry an N-linked (GlcNAc...) asparagine glycan. The cysteines at positions 32 and 98 are disulfide-linked. The chain crosses the membrane as a helical; Signal-anchor for type III membrane protein span at residues 119-139 (VAAVLASLLVLLALLLAALLY). Residues 140–410 (VKCRLNVLLW…FYCLVSKDDM (271 aa)) lie on the Cytoplasmic side of the membrane. The 145-residue stretch at 163 to 307 (KLYDAYVSYS…DFWKEVQLAL (145 aa)) folds into the TIR domain. A disordered region spans residues 340-390 (EGRALDSEVDPDPEGDLGVRGPVFGEPSAPPHTSGVSLGESRSSEVDVSDL). A Phosphoserine modification is found at Ser383.

Belongs to the interleukin-1 receptor family. In terms of assembly, interacts with IL1R1, IRAK1, TLR4, TLR5, TLR9 and TRAF6. Upon IL-1 stimulation found in a complex at least composed of IL1R1, SIGIRR, MYD88, IRAK1 and TRAF6. Upon stimulation with LPC found in a complex at least composed of TLR4, SIG1IR, MYD88, IRAK1 and TRAF6. Interacts with PALM3. Mainly expressed in epithelial tissues such as kidney, lung and gut.

Its subcellular location is the membrane. Functionally, acts as a negative regulator of the Toll-like and IL-1R receptor signaling pathways. Attenuates the recruitment of receptor-proximal signaling components to the TLR4 receptor, probably through an TIR-TIR domain interaction with TLR4. Through its extracellular domain interferes with the heterodimerization of Il1R1 and IL1RAP. The sequence is that of Single Ig IL-1-related receptor (SIGIRR) from Homo sapiens (Human).